We begin with the raw amino-acid sequence, 1198 residues long: Sterol 3-beta-glucosyltransferase (1198 aa).

Positions 1–11 are enriched in polar residues; the sequence is MPITQIISASD. 2 disordered regions span residues 1–89 and 124–162; these read MPIT…DNAD and SQVD…PEVP. A compositionally biased stretch (basic residues) spans 35-51; that stretch reads RHHRLSRSLSKFKRWRG. Low complexity predominate over residues 52 to 67; the sequence is RSNSSLSMGSSEQQEL. Ser-76 is modified (phosphoserine). The segment covering 146–162 has biased composition (basic and acidic residues); that stretch reads VKSKKENLKTKSHPEVP. The GRAM 1 domain maps to 187–236; that stretch reads AKLRQRFCLDEQEPFLNDFPAWLLKDVLVQGHIFITTKHFLFFAYLPKNP. Residues 238–336 enclose the PH domain; the sequence is SVKMSGNLNI…WVNALKKEQF (99 aa). The tract at residues 427–465 is disordered; that stretch reads KSSFGKETPATAEQKNNGEDSKYLNVPTSAVPSSENGKK. A compositionally biased stretch (polar residues) spans 452–461; that stretch reads VPTSAVPSSE. In terms of domain architecture, GRAM 2 spans 570–636; the sequence is ERFRYHFKFN…VDVETCYKEK (67 aa). Ser-693 is subject to Phosphoserine. Positions 749, 750, 752, 1025, 1053, 1054, 1056, 1069, 1072, 1073, 1074, 1093, and 1094 each coordinate UDP-alpha-D-glucose.

Belongs to the glycosyltransferase 28 family.

It is found in the cytoplasm. The protein localises to the membrane. It carries out the reaction a sterol + UDP-alpha-D-glucose = a sterol 3-beta-D-glucoside + UDP + H(+). The catalysed reaction is ergosterol + UDP-alpha-D-glucose = ergosteryl 3-beta-D-glucoside + UDP + H(+). Sterol glycosyltransferase responsible for the glycosylation of ergosterol to form ergosterol-glucoside. Also shows activity in vitro on other sterols such as cholesterol, beta-sitosterol, stigmasterol and tomatidine. In contrasts to what is observed in Pichia pastoris and Aspergillus oryzae, is not involved in cytoplasm to vacuole transport (Cvt), pexophagy or nonselective autophagy in Saccharomyces cerevisiae. This chain is Sterol 3-beta-glucosyltransferase, found in Saccharomyces cerevisiae (strain YJM789) (Baker's yeast).